The chain runs to 654 residues: Tetracycline resistance protein TetQ (654 aa).

The tr-type G domain occupies 1-244 (MNIINLGILA…AISSFILPPE (244 aa)). Residues 10-17 (AHIDAGKT), 74-78 (DTPGH), and 128-131 (NKID) each bind GTP.

The protein belongs to the TRAFAC class translation factor GTPase superfamily. Classic translation factor GTPase family. TetM/TetO subfamily.

Abolishes the inhibitory effect of tetracyclin on protein synthesis by a non-covalent modification of the ribosomes. This is Tetracycline resistance protein TetQ (tetQ) from Prevotella intermedia.